The chain runs to 333 residues: Ketol-acid reductoisomerase (NADP(+)) (333 aa).

One can recognise a KARI N-terminal Rossmann domain in the interval methionine 1–threonine 171. NADP(+) contacts are provided by residues tyrosine 14–glutamine 17, arginine 37, threonine 42, and aspartate 72–glutamine 75. Residue histidine 97 is part of the active site. Glycine 123 contacts NADP(+). The KARI C-terminal knotted domain maps to threonine 172–leucine 317. The Mg(2+) site is built by aspartate 180, glutamate 184, glutamate 216, and glutamate 220. Serine 241 contacts substrate.

It belongs to the ketol-acid reductoisomerase family. The cofactor is Mg(2+).

The enzyme catalyses (2R)-2,3-dihydroxy-3-methylbutanoate + NADP(+) = (2S)-2-acetolactate + NADPH + H(+). The catalysed reaction is (2R,3R)-2,3-dihydroxy-3-methylpentanoate + NADP(+) = (S)-2-ethyl-2-hydroxy-3-oxobutanoate + NADPH + H(+). The protein operates within amino-acid biosynthesis; L-isoleucine biosynthesis; L-isoleucine from 2-oxobutanoate: step 2/4. It participates in amino-acid biosynthesis; L-valine biosynthesis; L-valine from pyruvate: step 2/4. Involved in the biosynthesis of branched-chain amino acids (BCAA). Catalyzes an alkyl-migration followed by a ketol-acid reduction of (S)-2-acetolactate (S2AL) to yield (R)-2,3-dihydroxy-isovalerate. In the isomerase reaction, S2AL is rearranged via a Mg-dependent methyl migration to produce 3-hydroxy-3-methyl-2-ketobutyrate (HMKB). In the reductase reaction, this 2-ketoacid undergoes a metal-dependent reduction by NADPH to yield (R)-2,3-dihydroxy-isovalerate. This is Ketol-acid reductoisomerase (NADP(+)) from Xanthomonas axonopodis pv. citri (strain 306).